A 140-amino-acid chain; its full sequence is Large ribosomal subunit protein uL11 (140 aa).

The protein belongs to the universal ribosomal protein uL11 family. As to quaternary structure, part of the ribosomal stalk of the 50S ribosomal subunit. Interacts with L10 and the large rRNA to form the base of the stalk. L10 forms an elongated spine to which L12 dimers bind in a sequential fashion forming a multimeric L10(L12)X complex. In terms of processing, one or more lysine residues are methylated.

Its function is as follows. Forms part of the ribosomal stalk which helps the ribosome interact with GTP-bound translation factors. The chain is Large ribosomal subunit protein uL11 from Geotalea daltonii (strain DSM 22248 / JCM 15807 / FRC-32) (Geobacter daltonii).